A 456-amino-acid polypeptide reads, in one-letter code: Kynurenine 3-monooxygenase (456 aa).

This sequence belongs to the aromatic-ring hydroxylase family. KMO subfamily. It depends on FAD as a cofactor.

It is found in the mitochondrion outer membrane. The enzyme catalyses L-kynurenine + NADPH + O2 + H(+) = 3-hydroxy-L-kynurenine + NADP(+) + H2O. The protein operates within cofactor biosynthesis; NAD(+) biosynthesis; quinolinate from L-kynurenine: step 1/3. Catalyzes the hydroxylation of L-kynurenine (L-Kyn) to form 3-hydroxy-L-kynurenine (L-3OHKyn). Required for synthesis of quinolinic acid. This Candida albicans (strain SC5314 / ATCC MYA-2876) (Yeast) protein is Kynurenine 3-monooxygenase.